Consider the following 85-residue polypeptide: uncharacterized protein (85 aa).

It is found in the mitochondrion. This is an uncharacterized protein from Paramecium tetraurelia.